We begin with the raw amino-acid sequence, 176 residues long: Cytochrome b (176 aa).

The next 3 membrane-spanning stretches (helical) occupy residues 33–53 (FGSL…FLAM), 77–98 (WLLR…YLHV), and 113–133 (WNMG…GYVL). H83 and H97 together coordinate heme b.

Belongs to the cytochrome b family. As to quaternary structure, the cytochrome bc1 complex contains 11 subunits: 3 respiratory subunits (MT-CYB, CYC1 and UQCRFS1), 2 core proteins (UQCRC1 and UQCRC2) and 6 low-molecular weight proteins (UQCRH/QCR6, UQCRB/QCR7, UQCRQ/QCR8, UQCR10/QCR9, UQCR11/QCR10 and a cleavage product of UQCRFS1). This cytochrome bc1 complex then forms a dimer. It depends on heme b as a cofactor.

The protein localises to the mitochondrion inner membrane. Its function is as follows. Component of the ubiquinol-cytochrome c reductase complex (complex III or cytochrome b-c1 complex) that is part of the mitochondrial respiratory chain. The b-c1 complex mediates electron transfer from ubiquinol to cytochrome c. Contributes to the generation of a proton gradient across the mitochondrial membrane that is then used for ATP synthesis. The polypeptide is Cytochrome b (MT-CYB) (Tomopeas ravum (Blunt-eared bat)).